A 193-amino-acid polypeptide reads, in one-letter code: Crossover junction endodeoxyribonuclease RuvC (193 aa).

Residues Asp7, Glu68, and Asp141 contribute to the active site. Positions 7, 68, and 141 each coordinate Mg(2+).

The protein belongs to the RuvC family. As to quaternary structure, homodimer which binds Holliday junction (HJ) DNA. The HJ becomes 2-fold symmetrical on binding to RuvC with unstacked arms; it has a different conformation from HJ DNA in complex with RuvA. In the full resolvosome a probable DNA-RuvA(4)-RuvB(12)-RuvC(2) complex forms which resolves the HJ. Mg(2+) serves as cofactor.

It is found in the cytoplasm. The catalysed reaction is Endonucleolytic cleavage at a junction such as a reciprocal single-stranded crossover between two homologous DNA duplexes (Holliday junction).. The RuvA-RuvB-RuvC complex processes Holliday junction (HJ) DNA during genetic recombination and DNA repair. Endonuclease that resolves HJ intermediates. Cleaves cruciform DNA by making single-stranded nicks across the HJ at symmetrical positions within the homologous arms, yielding a 5'-phosphate and a 3'-hydroxyl group; requires a central core of homology in the junction. The consensus cleavage sequence is 5'-(A/T)TT(C/G)-3'. Cleavage occurs on the 3'-side of the TT dinucleotide at the point of strand exchange. HJ branch migration catalyzed by RuvA-RuvB allows RuvC to scan DNA until it finds its consensus sequence, where it cleaves and resolves the cruciform DNA. The chain is Crossover junction endodeoxyribonuclease RuvC from Bifidobacterium adolescentis (strain ATCC 15703 / DSM 20083 / NCTC 11814 / E194a).